A 25-amino-acid chain; its full sequence is Putative cytochrome c4 (25 aa).

The segment at 1–25 (QEDIEAGKQKSATCTACHGQEGNST) is disordered. Heme is bound by residues C14 and C17.

Post-translationally, binds 2 heme groups per subunit.

The protein resides in the periplasm. In terms of biological role, diheme, high potential cytochrome c believed to be an intermediate electron donor to terminal oxidation systems. The sequence is that of Putative cytochrome c4 from Aliivibrio fischeri (Vibrio fischeri).